The sequence spans 218 residues: MHRSPLAWLRLLLAAVLGAFLLGGPLHAAETAATRSPAWAQAVDPSINLYRMSPTLYRSALPNAQSVALLQRLQVKTVVSFIKDDDRAWLGQAPVRVLSLPTHADRVDDAEVLSVLRQLQAAEREGPVLMHCKHGNNRTGLFAAMYRIVVQGWDKQAALEEMQHGGFGDEDDMRDASAYVRGADVDGLRLAMANGECSPSRFAVCHVREWMAQALDRP.

An N-terminal signal peptide occupies residues 1–28 (MHRSPLAWLRLLLAAVLGAFLLGGPLHA). A Tyrosine-protein phosphatase domain is found at 44–188 (DPSINLYRMS…YVRGADVDGL (145 aa)). Asp-105 serves as the catalytic Proton donor/acceptor. The active-site Phosphocysteine intermediate is Cys-132.

It belongs to the protein-tyrosine phosphatase family.

It localises to the periplasm. The catalysed reaction is O-phospho-L-tyrosyl-[protein] + H2O = L-tyrosyl-[protein] + phosphate. It catalyses the reaction O-phospho-L-threonyl-[protein] + H2O = L-threonyl-[protein] + phosphate. It carries out the reaction O-phospho-L-seryl-[protein] + H2O = L-seryl-[protein] + phosphate. Phosphatase that regulates diverse phenotypes in P.aeruginosa via regulation of the concentration of cellular c-di-GMP. Acts by dephosphorylating the membrane-anchored diguanylate cyclase TpbB at tyrosine and serine/threonine sites, leading to inactivation of TpbB and reduced c-di-GMP production. In vitro shows phosphatase activity toward p-nitrophenyl phosphate (pNPP) and tyrosine phosphopeptides. Can efficiently dephosphorylate two phosphorylated peptides derived from the periplasmic domain of TpbB, with a strong preference for Tyr-48 over Tyr-62. The protein is Dual specificity protein phosphatase TpbA of Pseudomonas aeruginosa (strain ATCC 15692 / DSM 22644 / CIP 104116 / JCM 14847 / LMG 12228 / 1C / PRS 101 / PAO1).